The sequence spans 304 residues: MTLRQAIDLAAALLAEAGVDSARCDAEQLAAHLAGTDRGRLPLFEPPGDEFFGRYRDIVTARARRVPLQHLIGTVSFGPVVLHVGPGVFVPRPETEAILAWATAQSLPARPLIVDACTGSGALAVALAQHRANLGLKARIIGIDDSDCALDYARRNAAGTPVELVRADVTTPRLLPELDGQVDLMVSNPPYIPDAAVLEPEVAQHDPHHALFGGPDGMTVISAVVGLAGRWLRPGGLFAVEHDDTTSSSTVDLVSSTKLFVDVQARKDLAGRPRFVTAMRWGHLPLAGENGAIDPRQRRCRAKR.

S-adenosyl-L-methionine-binding residues include Asp-144 and Asn-188. 188-191 (NPPY) lines the substrate pocket.

Belongs to the protein N5-glutamine methyltransferase family. PrmC subfamily.

It catalyses the reaction L-glutaminyl-[peptide chain release factor] + S-adenosyl-L-methionine = N(5)-methyl-L-glutaminyl-[peptide chain release factor] + S-adenosyl-L-homocysteine + H(+). Methylates the class 1 translation termination release factors RF1/PrfA and RF2/PrfB on the glutamine residue of the universally conserved GGQ motif. The protein is Release factor glutamine methyltransferase of Mycobacterium tuberculosis (strain ATCC 25618 / H37Rv).